The primary structure comprises 307 residues: UDP-N-acetylenolpyruvoylglucosamine reductase (307 aa).

Positions 21-183 (RVGGPADLFF…TEVVMEGPPG (163 aa)) constitute an FAD-binding PCMH-type domain. Arg-163 is an active-site residue. Residues 200–209 (EATQPTKDRT) are compositionally biased toward basic and acidic residues. Residues 200–227 (EATQPTKDRTAGSTFRNPAGFSSTGRAD) are disordered. The segment covering 210–224 (AGSTFRNPAGFSSTG) has biased composition (polar residues). The active-site Proton donor is the Ser-212. Residue Glu-294 is part of the active site.

It belongs to the MurB family. The cofactor is FAD.

The protein localises to the cytoplasm. The catalysed reaction is UDP-N-acetyl-alpha-D-muramate + NADP(+) = UDP-N-acetyl-3-O-(1-carboxyvinyl)-alpha-D-glucosamine + NADPH + H(+). The protein operates within cell wall biogenesis; peptidoglycan biosynthesis. In terms of biological role, cell wall formation. The chain is UDP-N-acetylenolpyruvoylglucosamine reductase from Dinoroseobacter shibae (strain DSM 16493 / NCIMB 14021 / DFL 12).